A 387-amino-acid polypeptide reads, in one-letter code: Probable purine permease 6 (387 aa).

Residues 1–24 (MMELESETQELHLHVNGEPEGKFS) form a disordered region. The segment covering 9-24 (QELHLHVNGEPEGKFS) has biased composition (basic and acidic residues). A run of 10 helical transmembrane segments spans residues 36–56 (LRVSLYVTLLLAGETIATLLG), 68–88 (WLETLVQLVGFPLTLPCYYYL), 106–126 (FLTLSLVYIGLGLLVAGHCIL), 129–149 (FGLLYLPVSTFSLISASQLAF), 162–182 (ITPFILNSLVLLTISSTLLVI), 201–221 (YVIGYICAVGSSAGYSLVLSL), 238–258 (ILDMATYPSMVATCVVVVGLF), 283–303 (INIGSTISWQACLIGSVGLII), 309–329 (FSNVISTLCLPVVPVLAVVFF), and 333–353 (MSGIKLVAMFLAIWGFVSYGY). The disordered stretch occupies residues 362 to 387 (PEEDQELPQSKEEEEQKQVDTIHVQA). Basic and acidic residues predominate over residues 370–381 (QSKEEEEQKQVD).

It belongs to the purine permeases (TC 2.A.7.14) family.

It is found in the membrane. In Arabidopsis thaliana (Mouse-ear cress), this protein is Probable purine permease 6 (PUP6).